A 234-amino-acid polypeptide reads, in one-letter code: Purine nucleoside phosphorylase DeoD-type (234 aa).

Position 4 (His-4) interacts with a purine D-ribonucleoside. Phosphate-binding positions include Gly-20, Arg-24, Arg-43, and 87–90 (RIGS). Residues 179 to 181 (DME) and 203 to 204 (SD) each bind a purine D-ribonucleoside. Asp-204 acts as the Proton donor in catalysis.

It belongs to the PNP/UDP phosphorylase family. Homohexamer; trimer of homodimers.

It carries out the reaction a purine D-ribonucleoside + phosphate = a purine nucleobase + alpha-D-ribose 1-phosphate. It catalyses the reaction a purine 2'-deoxy-D-ribonucleoside + phosphate = a purine nucleobase + 2-deoxy-alpha-D-ribose 1-phosphate. In terms of biological role, catalyzes the reversible phosphorolytic breakdown of the N-glycosidic bond in the beta-(deoxy)ribonucleoside molecules, with the formation of the corresponding free purine bases and pentose-1-phosphate. In Shewanella oneidensis (strain ATCC 700550 / JCM 31522 / CIP 106686 / LMG 19005 / NCIMB 14063 / MR-1), this protein is Purine nucleoside phosphorylase DeoD-type.